The chain runs to 768 residues: Eukaryotic elongation factor 2 kinase (768 aa).

Positions 1–17 (MTIDTTNESDNSPTNSP) are enriched in polar residues. The segment at 1 to 21 (MTIDTTNESDNSPTNSPGLEA) is disordered. Positions 102–309 (RYSAIRKQWT…ICETMDLSNF (208 aa)) constitute an Alpha-type protein kinase domain. 279–284 (GDGNLG) is a binding site for ATP. A compositionally biased stretch (acidic residues) spans 402-411 (SEDEEDEEED). Residues 402 to 446 (SEDEEDEEEDYPRSEKSGNSQKSRRSRMSISTRSSGDESASRPRK) form a disordered region.

This sequence belongs to the protein kinase superfamily. Alpha-type protein kinase family. In terms of assembly, monomer or homodimer. Interacts with cmd-1 in the presence of Ca(2+).

It carries out the reaction [translation elongation factor 2] + ATP = [translation elongation factor 2]-phosphate + ADP + H(+). With respect to regulation, calcium(2+)/calmodulin dependent activity. Undergoes calcium/calmodulin-dependent intramolecular autophosphorylation, and this results in it becoming partially calcium/calmodulin-independent. Phosphorylates elongation factor-2 (eEF-2) at two threonine residues that are conserved in all eukaryotes and are located within a GTP-binding domain. Calcium(2+)/calmodulin dependent activity. Inactivates eEF-2 by catalyzing its phosphorylation. eEF-2 catalyzes the movement of the ribosome along mRNA during translation in eukaryotic cells. The sequence is that of Eukaryotic elongation factor 2 kinase (efk-1) from Caenorhabditis elegans.